Reading from the N-terminus, the 303-residue chain is Albumin b-32 (303 aa).

Low complexity predominate over residues 112 to 137 (ATPTSSATTPGGSASAAGTRTSSATR). Residues 112 to 175 (ATPTSSATTP…GGGGADADAD (64 aa)) are disordered. Over residues 146 to 156 (ARDDQGRQRPG) the composition is skewed to basic and acidic residues.

Belongs to the ribosome-inactivating protein family. Type 1 RIP subfamily. In terms of assembly, monomer. Endosperm.

The protein localises to the cytoplasm. It carries out the reaction Endohydrolysis of the N-glycosidic bond at one specific adenosine on the 28S rRNA.. Functionally, a possible regulatory factor for the synthesis of zeins, the major group of storage proteins. The polypeptide is Albumin b-32 (O6) (Zea mays (Maize)).